Consider the following 497-residue polypeptide: Glycerol kinase (497 aa).

Threonine 12 is a binding site for ADP. 3 residues coordinate ATP: threonine 12, threonine 13, and serine 14. Position 12 (threonine 12) interacts with sn-glycerol 3-phosphate. Arginine 16 is a binding site for ADP. Residues arginine 82, glutamate 83, tyrosine 134, and aspartate 243 each coordinate sn-glycerol 3-phosphate. Residues arginine 82, glutamate 83, tyrosine 134, aspartate 243, and glutamine 244 each contribute to the glycerol site. ADP contacts are provided by threonine 265 and glycine 308. Residues threonine 265, glycine 308, glutamine 312, and glycine 411 each coordinate ATP. Residue glycine 411 participates in ADP binding.

The protein belongs to the FGGY kinase family.

It catalyses the reaction glycerol + ATP = sn-glycerol 3-phosphate + ADP + H(+). It participates in polyol metabolism; glycerol degradation via glycerol kinase pathway; sn-glycerol 3-phosphate from glycerol: step 1/1. With respect to regulation, inhibited by fructose 1,6-bisphosphate (FBP). Its function is as follows. Key enzyme in the regulation of glycerol uptake and metabolism. Catalyzes the phosphorylation of glycerol to yield sn-glycerol 3-phosphate. The polypeptide is Glycerol kinase (Xanthobacter autotrophicus (strain ATCC BAA-1158 / Py2)).